Consider the following 1297-residue polypeptide: Phosphoribosylformylglycinamidine synthase (1297 aa).

The segment at 305–324 (FPGAATGSGGEIRDEGATGR) is disordered. Residue 307-318 (GAATGSGGEIRD) participates in ATP binding. The Mg(2+) site is built by D679, E718, N722, and D886. An ATP-binding site is contributed by S888. In terms of domain architecture, Glutamine amidotransferase type-1 spans 1044-1297 (IAVLREQGVN…LFRNARVFFK (254 aa)). Catalysis depends on C1137, which acts as the Nucleophile. Catalysis depends on residues H1262 and E1264.

In the N-terminal section; belongs to the FGAMS family. In terms of assembly, monomer.

The protein resides in the cytoplasm. The catalysed reaction is N(2)-formyl-N(1)-(5-phospho-beta-D-ribosyl)glycinamide + L-glutamine + ATP + H2O = 2-formamido-N(1)-(5-O-phospho-beta-D-ribosyl)acetamidine + L-glutamate + ADP + phosphate + H(+). Its pathway is purine metabolism; IMP biosynthesis via de novo pathway; 5-amino-1-(5-phospho-D-ribosyl)imidazole from N(2)-formyl-N(1)-(5-phospho-D-ribosyl)glycinamide: step 1/2. Functionally, phosphoribosylformylglycinamidine synthase involved in the purines biosynthetic pathway. Catalyzes the ATP-dependent conversion of formylglycinamide ribonucleotide (FGAR) and glutamine to yield formylglycinamidine ribonucleotide (FGAM) and glutamate. This chain is Phosphoribosylformylglycinamidine synthase, found in Mannheimia succiniciproducens (strain KCTC 0769BP / MBEL55E).